The following is a 429-amino-acid chain: 3-phosphoshikimate 1-carboxyvinyltransferase (429 aa).

Residues K23, S24, and R28 each coordinate 3-phosphoshikimate. K23 provides a ligand contact to phosphoenolpyruvate. Phosphoenolpyruvate is bound by residues G95 and R123. 3-phosphoshikimate is bound by residues S168, Q170, D316, and K343. A phosphoenolpyruvate-binding site is contributed by Q170. The active-site Proton acceptor is the D316. Positions 347 and 389 each coordinate phosphoenolpyruvate.

Belongs to the EPSP synthase family. As to quaternary structure, monomer.

Its subcellular location is the cytoplasm. It carries out the reaction 3-phosphoshikimate + phosphoenolpyruvate = 5-O-(1-carboxyvinyl)-3-phosphoshikimate + phosphate. It functions in the pathway metabolic intermediate biosynthesis; chorismate biosynthesis; chorismate from D-erythrose 4-phosphate and phosphoenolpyruvate: step 6/7. Its function is as follows. Catalyzes the transfer of the enolpyruvyl moiety of phosphoenolpyruvate (PEP) to the 5-hydroxyl of shikimate-3-phosphate (S3P) to produce enolpyruvyl shikimate-3-phosphate and inorganic phosphate. This Bacillus thuringiensis (strain Al Hakam) protein is 3-phosphoshikimate 1-carboxyvinyltransferase.